The following is a 134-amino-acid chain: Small ribosomal subunit protein bS6 (134 aa).

Residues 113–122 (NKDIKEKEQP) show a composition bias toward basic and acidic residues. A disordered region spans residues 113-134 (NKDIKEKEQPSESNVDADLKVN).

This sequence belongs to the bacterial ribosomal protein bS6 family.

Its function is as follows. Binds together with bS18 to 16S ribosomal RNA. In Borrelia recurrentis (strain A1), this protein is Small ribosomal subunit protein bS6.